Consider the following 116-residue polypeptide: UPF0342 protein CTC_01059 (116 aa).

The protein belongs to the UPF0342 family.

The sequence is that of UPF0342 protein CTC_01059 from Clostridium tetani (strain Massachusetts / E88).